A 197-amino-acid polypeptide reads, in one-letter code: CASP-like protein 0U1 (197 aa).

At 1 to 13 the chain is on the cytoplasmic side; that stretch reads MDDFDPTVTNSPK. A helical transmembrane segment spans residues 14–34; it reads FRLIAVQCLFSITAFAAMLSQ. Topologically, residues 35-63 are extracellular; sequence RHGLAGPDEMTLEECGPQACGYQKFSNFK. A helical membrane pass occupies residues 64–84; the sequence is FLIAVCIIYAVFSLVVMAAYL. The Cytoplasmic portion of the chain corresponds to 85 to 99; sequence LQRVPPPVTELTAYT. Residues 100-120 traverse the membrane as a helical segment; that stretch reads VMNVLLFAAFAMSATSCNITI. Residues 121 to 135 lie on the Extracellular side of the membrane; sequence VDPVYPVCKRATSAK. The chain crosses the membrane as a helical span at residues 136-156; that stretch reads ASIAFAFFTWLAVCFSMLFTY. Topologically, residues 157–197 are cytoplasmic; that stretch reads KEWRDVDYHVPGSGAYEFVPGVTSGSSRSSYPPQASSSSYA. The segment at 178–197 is disordered; that stretch reads VTSGSSRSSYPPQASSSSYA. The segment covering 180 to 197 has biased composition (low complexity); that stretch reads SGSSRSSYPPQASSSSYA.

The protein belongs to the Casparian strip membrane proteins (CASP) family. In terms of assembly, homodimer and heterodimers.

The protein resides in the cell membrane. The polypeptide is CASP-like protein 0U1 (Micromonas commoda (strain RCC299 / NOUM17 / CCMP2709) (Picoplanktonic green alga)).